The chain runs to 679 residues: Protein CASP (679 aa).

The Cytoplasmic segment spans residues Met1–Met614. Coiled-coil stretches lie at residues Ala14 to Leu90 and Arg178 to Asp341. Ser364 is modified (phosphoserine). A coiled-coil region spans residues Ala385–His444. Ser450 and Ser453 each carry phosphoserine. A coiled-coil region spans residues Ile492–Arg540. Ser555 carries the post-translational modification Phosphoserine. The helical; Anchor for type IV membrane protein transmembrane segment at Val615–Ile635 threads the bilayer. Residues Asn636–Arg679 lie on the Lumenal side of the membrane.

This sequence belongs to the CASP family.

It is found in the golgi apparatus membrane. Its function is as follows. May be involved in intra-Golgi transport. The chain is Protein CASP (COY1) from Saccharomyces cerevisiae (strain ATCC 204508 / S288c) (Baker's yeast).